Consider the following 33-residue polypeptide: uncharacterized protein (33 aa).

Positions 1–33 are disordered; sequence MQPGTGLSFDISQILKQGSDPKQKLPERQAIVL.

This is an uncharacterized protein from Caenorhabditis elegans.